We begin with the raw amino-acid sequence, 129 residues long: Large ribosomal subunit protein bL17 (129 aa).

It belongs to the bacterial ribosomal protein bL17 family. As to quaternary structure, part of the 50S ribosomal subunit. Contacts protein L32.

This is Large ribosomal subunit protein bL17 from Yersinia enterocolitica serotype O:8 / biotype 1B (strain NCTC 13174 / 8081).